Consider the following 171-residue polypeptide: Peptide deformylase (171 aa).

Fe cation contacts are provided by cysteine 91 and histidine 133. Glutamate 134 is an active-site residue. Histidine 137 serves as a coordination point for Fe cation.

Belongs to the polypeptide deformylase family. Fe(2+) serves as cofactor.

It carries out the reaction N-terminal N-formyl-L-methionyl-[peptide] + H2O = N-terminal L-methionyl-[peptide] + formate. Removes the formyl group from the N-terminal Met of newly synthesized proteins. Requires at least a dipeptide for an efficient rate of reaction. N-terminal L-methionine is a prerequisite for activity but the enzyme has broad specificity at other positions. The chain is Peptide deformylase from Haemophilus ducreyi (strain 35000HP / ATCC 700724).